Reading from the N-terminus, the 360-residue chain is Putative transcription factor A494R (360 aa).

A zinc finger lies at 153 to 175 (CTCGGQMELWVNSTQSDLVCNEC).

Belongs to the nucleo-cytoplasmic large DNA viruses (NCLDVs) VLTF-3 family.

Its function is as follows. Putative transcription factor. The protein is Putative transcription factor A494R of Paramecium bursaria Chlorella virus 1 (PBCV-1).